Here is a 659-residue protein sequence, read N- to C-terminus: MMDVKLKIQQLVNLIKNYDYHYYVLSEPLIDDFEYDMLYKSLQQLEKDHPDLIQIDSPTQRVGGEAVKGFKKLNHNSPMLSLENAFSTKEIANFIDNINFQTNSKNEFVVEPKIDGVSISLTYKNGVLVHALTRGDGSVGEDVLNNVKTIKSIPLTIPFTKTIEIRGEIFVDKKTFLAINNQLEKPFANARNLAAGTIRNLNSEITAQRKLRALFYYIPNGLEESITTQTMVLEQLKQWKFPVSDTIRVFQNKFQLINYLEAFDKKREQLTFNLDGLVIKLNSLLFYQQLGATSKSPRWAIAFKFSPKFVQTKLTAVLITIGRTGRVNYTAKLESVNLDGTKVTAATLHNFDYIKTKDIRINDTVVIYKAGEIIPKVLKVNLEKRKNDTIIIQEQKYCPSCNSKLVKIVDEVDQYCTNETCKERNIQLINYFVSKTAMDINGLNINTITKLYEHNLVRSIVDLYDLKDKKNQVLKLDLKIGDKLFNKLVDNIENSKQKGMARLLTGLGIKHVGNVLAKNLANHFKNIKALQHASLENLISLNDVGITVAESLYNWFHDPNHLQLIEQLELRQVKTDQLPLKINFETNSIYFQKRFLITGSFNISRDQIKDLLSAKFDCQFASEVKPTVDFVIAGNKPTLRKINHAKELNIPIINEAIWT.

Residues 32 to 36, 81 to 82, and glutamate 111 contribute to the NAD(+) site; these read DFEYD and SL. Lysine 113 acts as the N6-AMP-lysine intermediate in catalysis. Residues arginine 134, glutamate 168, lysine 280, and lysine 304 each contribute to the NAD(+) site. Positions 398, 401, 416, and 421 each coordinate Zn(2+). The 71-residue stretch at 585–655 folds into the BRCT domain; it reads ETNSIYFQKR…KELNIPIINE (71 aa).

It belongs to the NAD-dependent DNA ligase family. LigA subfamily. It depends on Mg(2+) as a cofactor. Requires Mn(2+) as cofactor.

It catalyses the reaction NAD(+) + (deoxyribonucleotide)n-3'-hydroxyl + 5'-phospho-(deoxyribonucleotide)m = (deoxyribonucleotide)n+m + AMP + beta-nicotinamide D-nucleotide.. DNA ligase that catalyzes the formation of phosphodiester linkages between 5'-phosphoryl and 3'-hydroxyl groups in double-stranded DNA using NAD as a coenzyme and as the energy source for the reaction. It is essential for DNA replication and repair of damaged DNA. The sequence is that of DNA ligase from Mycoplasma genitalium (strain ATCC 33530 / DSM 19775 / NCTC 10195 / G37) (Mycoplasmoides genitalium).